The chain runs to 411 residues: Na(+)-translocating NADH-quinone reductase subunit B (411 aa).

A run of 3 helical transmembrane segments spans residues 56–76, 121–141, and 161–181; these read IMITVWLCTFPAMFFGMYNAG, FLPIYLVTFAVGGFWEVLFAV, and ILPATIPLWQVALGITFGVVI. Thr-228 carries the post-translational modification FMN phosphoryl threonine. The next 5 helical transmembrane spans lie at 254 to 274, 284 to 304, 309 to 329, 345 to 365, and 368 to 388; these read FIPGSVGETSTLAILIGAAVL, IMLGVFVGMALTAMLFTAIGS, MFGMPWYWHLVLGGFAFGMVF, LLFGFLIGVMTVLIRVVNPAF, and GIMLAILFANLFAPMIDHFFV.

Belongs to the NqrB/RnfD family. In terms of assembly, composed of six subunits; NqrA, NqrB, NqrC, NqrD, NqrE and NqrF. It depends on FMN as a cofactor.

It is found in the cell inner membrane. The catalysed reaction is a ubiquinone + n Na(+)(in) + NADH + H(+) = a ubiquinol + n Na(+)(out) + NAD(+). Functionally, NQR complex catalyzes the reduction of ubiquinone-1 to ubiquinol by two successive reactions, coupled with the transport of Na(+) ions from the cytoplasm to the periplasm. NqrA to NqrE are probably involved in the second step, the conversion of ubisemiquinone to ubiquinol. In Chromohalobacter salexigens (strain ATCC BAA-138 / DSM 3043 / CIP 106854 / NCIMB 13768 / 1H11), this protein is Na(+)-translocating NADH-quinone reductase subunit B.